Here is a 128-residue protein sequence, read N- to C-terminus: Organic solute transporter subunit beta (128 aa).

At 1–30 the chain is on the extracellular side; sequence MDHSAEKAAANAEVPQELLEEMLWYFRAED. Residues 31–53 form a helical membrane-spanning segment; that stretch reads AAPWNYSILVLAVLVVMTSMFLL. Residues 54-128 lie on the Cytoplasmic side of the membrane; it reads RRSILANRNR…FLPDPQETES (75 aa). 2 disordered regions span residues 61-80 and 101-128; these read RNRK…HLDD and PDLA…ETES. Composition is skewed to basic and acidic residues over residues 66–80 and 101–115; these read QPQD…HLDD and PDLA…EKDS. Ser116 carries the post-translational modification Phosphoserine.

The protein belongs to the OST-beta family. As to quaternary structure, interacts with SLC51A. The Ost-alpha/Ost-beta complex is a heterodimer composed of alpha (SLC51A) and beta (SLC51B) subunit; induces the transport of SLC51A from the endoplasmic reticulum to the plasma membrane. In terms of tissue distribution, present at high level in ileum. In ileum, it is restricted to the apical domain on the mature villus enterocytes with little detectable expression in the goblet cells or crypt enterocytes (at protein level). Expressed in kidney but not in heart, brain, liver, spleen, embryo, lung, thymus, ovary nor testis.

Its subcellular location is the cell membrane. It carries out the reaction taurocholate(out) = taurocholate(in). The enzyme catalyses tauroursodeoxycholate(out) = tauroursodeoxycholate(in). It catalyses the reaction glycoursodeoxycholate(out) = glycoursodeoxycholate(in). The catalysed reaction is glycocholate(out) = glycocholate(in). It carries out the reaction taurochenodeoxycholate(out) = taurochenodeoxycholate(in). The enzyme catalyses glycochenodeoxycholate(out) = glycochenodeoxycholate(in). It catalyses the reaction taurodeoxycholate(out) = taurodeoxycholate(in). The catalysed reaction is glycodeoxycholate(out) = glycodeoxycholate(in). It carries out the reaction prostaglandin E2(out) = prostaglandin E2(in). The enzyme catalyses estrone 3-sulfate(out) = estrone 3-sulfate(in). It catalyses the reaction dehydroepiandrosterone 3-sulfate(out) = dehydroepiandrosterone 3-sulfate(in). Functionally, essential component of the Ost-alpha/Ost-beta complex, a heterodimer that acts as the intestinal basolateral transporter responsible for bile acid export from enterocytes into portal blood. The Ost-alpha/Ost-beta complex efficiently transports the major species of bile acids (taurocholate). Taurine conjugates are transported more efficiently across the basolateral membrane than glycine-conjugated bile acids. Can also transport steroids such as estrone 3-sulfate and dehydroepiandrosterone 3-sulfate, therefore playing a role in the enterohepatic circulation of sterols. Able to transport eicosanoids such as prostaglandin E2. Modulates SLC51A glycosylation, membrane trafficking and stability activities. The chain is Organic solute transporter subunit beta (Slc51b) from Mus musculus (Mouse).